The primary structure comprises 912 residues: Protein translocase subunit SecA (912 aa).

ATP-binding positions include Gln-87, 105–109, and Asp-508; that span reads GEGKT. A disordered region spans residues 865–912; that stretch reads DEEAAQVQSGNAPLPVSQVTRDEPKVGRNDPCPCGSGKKYKHCHGQLS. Zn(2+)-binding residues include Cys-896, Cys-898, Cys-907, and His-908. Over residues 902-912 the composition is skewed to basic residues; it reads KKYKHCHGQLS.

This sequence belongs to the SecA family. In terms of assembly, monomer and homodimer. Part of the essential Sec protein translocation apparatus which comprises SecA, SecYEG and auxiliary proteins SecDF-YajC and YidC. Zn(2+) serves as cofactor.

It is found in the cell inner membrane. The protein resides in the cytoplasm. The catalysed reaction is ATP + H2O + cellular proteinSide 1 = ADP + phosphate + cellular proteinSide 2.. Part of the Sec protein translocase complex. Interacts with the SecYEG preprotein conducting channel. Has a central role in coupling the hydrolysis of ATP to the transfer of proteins into and across the cell membrane, serving both as a receptor for the preprotein-SecB complex and as an ATP-driven molecular motor driving the stepwise translocation of polypeptide chains across the membrane. In Xanthomonas oryzae pv. oryzae (strain PXO99A), this protein is Protein translocase subunit SecA.